Consider the following 513-residue polypeptide: Cytochrome P450 monooxygenase CYP3 (513 aa).

The disordered stretch occupies residues M1–N21. C451 serves as a coordination point for heme.

Belongs to the cytochrome P450 family. Heme serves as cofactor.

The protein operates within secondary metabolite biosynthesis. In terms of biological role, cytochrome P450 monooxygenase; part of the gene cluster that mediates the biosynthesis of a tyrosine-derived cytochalasan acting as a fungal signal recognized by resistant rice plants and leads to avirulence in Pi33 resistant rice cultivars. The first step in the pathway is catalyzed by the hybrid PKS-NRPS ACE1, assisted by the enoyl reductase RAP1, that are responsible for fusion of the tyrosine precursor and the polyketide backbone. The polyketide synthase module (PKS) of ACE1 is responsible for the synthesis of the polyketide backbone and the downstream nonribosomal peptide synthetase (NRPS) amidates the carboxyl end of the polyketide with the tyrosine precursor. Because ACE1 lacks a designated enoylreductase (ER) domain, the required activity is provided the enoyl reductase RAP1. Reduction by the hydrolyase ORFZ, followed by dehydration and intra-molecular Diels-Alder cyclization by the Diels-Alderase ORF3 then yield the required isoindolone-fused macrocycle. A number of oxidative steps catalyzed by the tailoring enzymes identified within the cluster, including cytochrome P450 monooxygenases CYP1 to CYP4, the FAD-linked oxidoreductase OXR2 and the short-chain dehydrogenase/reductase OXR1, are further required to afford the final cytochalasans that confer avirulence and which have still to be identified. The monooxygenase CYP1 has been shown to be a site-selective C-18 hydroxylase whereas the function of CYP3 is the site-selective epoxidation of the C-6/C-7 olefin that is present in some intermediate compounds. Finally, SYN2 and RAP2 are not required for avirulence in Pi33 resistant rice cultivars. In Pyricularia oryzae (strain 70-15 / ATCC MYA-4617 / FGSC 8958) (Rice blast fungus), this protein is Cytochrome P450 monooxygenase CYP3.